The chain runs to 485 residues: NADH-quinone oxidoreductase subunit N (485 aa).

Transmembrane regions (helical) follow at residues 8–28, 35–55, 71–91, 105–125, 127–147, 159–179, 203–223, 235–255, 271–291, 297–317, 326–346, 373–393, 408–430, and 455–475; these read LIAL…MLSI, FLNA…LWFV, GFAM…CTFA, FYLL…ANHL, SLFL…GYAF, YTIL…LVYA, LLAG…LVPF, PAPV…GVVM, VVLA…ALSQ, LLGY…IALQ, VGVY…VVSL, AAVM…LGFI, WWLV…RVAV, and IVVL…QPLI.

This sequence belongs to the complex I subunit 2 family. In terms of assembly, NDH-1 is composed of 13 different subunits. Subunits NuoA, H, J, K, L, M, N constitute the membrane sector of the complex.

The protein localises to the cell inner membrane. It carries out the reaction a quinone + NADH + 5 H(+)(in) = a quinol + NAD(+) + 4 H(+)(out). In terms of biological role, NDH-1 shuttles electrons from NADH, via FMN and iron-sulfur (Fe-S) centers, to quinones in the respiratory chain. The immediate electron acceptor for the enzyme in this species is believed to be ubiquinone. Couples the redox reaction to proton translocation (for every two electrons transferred, four hydrogen ions are translocated across the cytoplasmic membrane), and thus conserves the redox energy in a proton gradient. The protein is NADH-quinone oxidoreductase subunit N of Escherichia coli O139:H28 (strain E24377A / ETEC).